Reading from the N-terminus, the 734-residue chain is Phosphoribosylformylglycinamidine synthase subunit PurL (734 aa).

His-49 is a catalytic residue. 2 residues coordinate ATP: Tyr-52 and Lys-91. Glu-93 is a binding site for Mg(2+). Substrate is bound by residues 94-97 and Arg-116; that span reads SHNH. His-95 (proton acceptor) is an active-site residue. A Mg(2+)-binding site is contributed by Asp-117. Residue Gln-240 participates in substrate binding. Residue Asp-268 coordinates Mg(2+). 312–314 provides a ligand contact to substrate; that stretch reads ESQ. ATP contacts are provided by Asp-491 and Gly-528. Asn-529 serves as a coordination point for Mg(2+). A substrate-binding site is contributed by Ser-531.

This sequence belongs to the FGAMS family. In terms of assembly, monomer. Part of the FGAM synthase complex composed of 1 PurL, 1 PurQ and 2 PurS subunits.

The protein localises to the cytoplasm. It catalyses the reaction N(2)-formyl-N(1)-(5-phospho-beta-D-ribosyl)glycinamide + L-glutamine + ATP + H2O = 2-formamido-N(1)-(5-O-phospho-beta-D-ribosyl)acetamidine + L-glutamate + ADP + phosphate + H(+). It functions in the pathway purine metabolism; IMP biosynthesis via de novo pathway; 5-amino-1-(5-phospho-D-ribosyl)imidazole from N(2)-formyl-N(1)-(5-phospho-D-ribosyl)glycinamide: step 1/2. In terms of biological role, part of the phosphoribosylformylglycinamidine synthase complex involved in the purines biosynthetic pathway. Catalyzes the ATP-dependent conversion of formylglycinamide ribonucleotide (FGAR) and glutamine to yield formylglycinamidine ribonucleotide (FGAM) and glutamate. The FGAM synthase complex is composed of three subunits. PurQ produces an ammonia molecule by converting glutamine to glutamate. PurL transfers the ammonia molecule to FGAR to form FGAM in an ATP-dependent manner. PurS interacts with PurQ and PurL and is thought to assist in the transfer of the ammonia molecule from PurQ to PurL. The sequence is that of Phosphoribosylformylglycinamidine synthase subunit PurL from Zymomonas mobilis subsp. mobilis (strain ATCC 31821 / ZM4 / CP4).